Consider the following 46-residue polypeptide: Osteocalcin 2 (46 aa).

The region spanning 1-43 (AVPAGTLSPLQMESLREVCEVNVACDEMADTAGIVAAYTXFYG) is the Gla domain. Residue threonine 6 is modified to Phosphothreonine. Residues glutamate 13, glutamate 17, glutamate 20, and aspartate 26 each contribute to the Ca(2+) site. 4-carboxyglutamate occurs at positions 13, 17, and 20. A disulfide bridge links cysteine 19 with cysteine 25. Glutamate 27 carries the post-translational modification 4-carboxyglutamate.

This sequence belongs to the osteocalcin/matrix Gla protein family. Gamma-carboxyglutamate residues are formed by vitamin K dependent carboxylation by GGCX. These residues are essential for the binding of calcium.

It localises to the secreted. Functionally, the carboxylated form is one of the main organic components of the bone matrix, which constitutes 1-2% of the total bone protein. The carboxylated form binds strongly to apatite and calcium. The chain is Osteocalcin 2 from Solea senegalensis (Senegalese sole).